The chain runs to 217 residues: Small ribosomal subunit protein uS3 (217 aa).

The KH type-2 domain occupies 38-106 (IRQLIQTKLA…QVHINIVEIK (69 aa)).

It belongs to the universal ribosomal protein uS3 family. Part of the 30S ribosomal subunit. Forms a tight complex with proteins S10 and S14.

In terms of biological role, binds the lower part of the 30S subunit head. Binds mRNA in the 70S ribosome, positioning it for translation. The chain is Small ribosomal subunit protein uS3 from Lactococcus lactis subsp. lactis (strain IL1403) (Streptococcus lactis).